The chain runs to 126 residues: RutC family protein y4sK (126 aa).

The protein belongs to the RutC family.

This Sinorhizobium fredii (strain NBRC 101917 / NGR234) protein is RutC family protein y4sK.